Here is an 89-residue protein sequence, read N- to C-terminus: Small ribosomal subunit protein uS14A (89 aa).

The protein belongs to the universal ribosomal protein uS14 family. In terms of assembly, part of the 30S ribosomal subunit. Contacts proteins S3 and S10.

Its function is as follows. Binds 16S rRNA, required for the assembly of 30S particles and may also be responsible for determining the conformation of the 16S rRNA at the A site. The sequence is that of Small ribosomal subunit protein uS14A from Bacillus velezensis (strain DSM 23117 / BGSC 10A6 / LMG 26770 / FZB42) (Bacillus amyloliquefaciens subsp. plantarum).